We begin with the raw amino-acid sequence, 308 residues long: E3 ubiquitin-protein ligase RING2 (308 aa).

Residue S2 is modified to N-acetylserine. The interaction with HIP2 stretch occupies residues 2-179 (SQAVQTNGTQ…AEDNGDSSHC (178 aa)). A Phosphoserine modification is found at S41. An RING-type zinc finger spans residues 51-91 (CPICLDMLKNTMTTKECLHRFCADCIITALRSGNKECPTCR). An interaction with nucleosomes via an acidic patch on histone H2A and histone H2B region spans residues 93–98 (KLVSKR). K112 is covalently cross-linked (Glycyl lysine isopeptide (Lys-Gly) (interchain with G-Cter in ubiquitin)). Phosphoserine occurs at positions 143 and 168. The disordered stretch occupies residues 157–206 (QRGKKQQIENGSGAEDNGDSSHCSNASTHSNQEAGPSNKRTKTSDDSGLE). Residues 176–191 (SSHCSNASTHSNQEAG) are compositionally biased toward polar residues. K249 is covalently cross-linked (Glycyl lysine isopeptide (Lys-Gly) (interchain with G-Cter in SUMO2)).

In terms of assembly, component of chromatin-associated Polycomb (PcG) complexes. Component of a number of PRC1-like complexes; these complexes contain either the polycomb group ring finger protein PCGF1, or PCGF2, or PCGF3, or BMI1, or PCGF5, or PCGF6. Distinct PRC1-like complexes are composed of a RING1 subunit (RING1B or RING1A), one of the six PCGF proteins (PCGF1, PCGF2, PCGF3, BMI1, PCGF5 or PCGF6), one PHC protein (PHC1, PHC2 or PHC3) and one of the CBX proteins (CBX2, CBX4, CBX6, CBX7 or CBX8). Part of a complex that contains RNF2, UB2D3 and BMI1; within that complex RNF2 and BMI1 form a tight heterodimer, where UB2D3 interacts only with RNF2. The complex composed of RNF2, UB2D3 and BMI1 binds nucleosomes, and has activity only with nucleosomal histone H2A. Part of a complex that contains PCGF5, RNF2 and UBE2D3. Part of a complex that contains AUTS2, PCGF5, RNF2, CSNK2B and RYBP. Interacts with CBX6 and CBX8. Interacts with PHC1, PCGF2, RYBP, CBX7, CBX4, CBX2, RNF1/RING1, BMI1 and PHC2. Interaction with RYBP and CBX7 is mutually exclusive; both compete for the same binding site on RNF2. Component of repressive BCOR complex containing a Polycomb group subcomplex at least composed of RYBP, PCGF1, BCOR and RING1. Interacts with CBX2 and PHC1. Interacts with CHTOP. Interacts with AURKB. Part of the E2F6.com-1 complex in G0 phase composed of E2F6, MGA, MAX, TFDP1, CBX3, BAT8, EUHMTASE1, RNF1/RING1, RNF2/RING2, MBLR, L3MBTL2 and YAF2. Component of some MLL1/MLL complex, at least composed of the core components KMT2A/MLL1, ASH2L, HCFC1/HCF1, WDR5 and RBBP5, as well as the facultative components BACC1, CHD8, E2F6, HSP70, INO80C, KANSL1, LAS1L, MAX, MCRS1, MGA, MYST1/MOF, PELP1, PHF20, PRP31, RING2, RUVB1/TIP49A, RUVB2/TIP49B, SENP3, TAF1, TAF4, TAF6, TAF7, TAF9 and TEX10. Interacts with RYBP, HIP2 and TFCP2. Interacts with NUPR1. Interacts with SAMD7 in a PHC2-dependent manner. Post-translationally, monoubiquitinated, by auto-ubiquitination. Polyubiquitinated in the presence of UBE2D3 (in vitro).

The protein resides in the nucleus. The protein localises to the cytoplasm. It is found in the chromosome. It catalyses the reaction S-ubiquitinyl-[E2 ubiquitin-conjugating enzyme]-L-cysteine + [acceptor protein]-L-lysine = [E2 ubiquitin-conjugating enzyme]-L-cysteine + N(6)-ubiquitinyl-[acceptor protein]-L-lysine.. It functions in the pathway protein modification; protein ubiquitination. E3 ubiquitin-protein ligase that mediates monoubiquitination of 'Lys-119' of histone H2A (H2AK119Ub), thereby playing a central role in histone code and gene regulation. H2AK119Ub gives a specific tag for epigenetic transcriptional repression and participates in X chromosome inactivation of female mammals. May be involved in the initiation of both imprinted and random X inactivation. Essential component of a Polycomb group (PcG) multiprotein PRC1-like complex, a complex class required to maintain the transcriptionally repressive state of many genes, including Hox genes, throughout development. PcG PRC1 complex acts via chromatin remodeling and modification of histones, rendering chromatin heritably changed in its expressibility. E3 ubiquitin-protein ligase activity is enhanced by BMI1/PCGF4. Acts as the main E3 ubiquitin ligase on histone H2A of the PRC1 complex, while RING1 may rather act as a modulator of RNF2/RING2 activity. Plays a role in the transcriptional repression of genes that are required for pluripotency in embryonic stem cells, thereby contributing to differentiation of the ectodermal and endodermal germ layers. Association with the chromosomal DNA is cell-cycle dependent. In resting B- and T-lymphocytes, interaction with AURKB leads to block its activity, thereby maintaining transcription in resting lymphocytes. Also acts as a negative regulator of autophagy by mediating ubiquitination of AMBRA1, leading to its subsequent degradation. This is E3 ubiquitin-protein ligase RING2 (Rnf2) from Rattus norvegicus (Rat).